Here is a 724-residue protein sequence, read N- to C-terminus: Threonine--tRNA ligase 2, cytoplasmic (724 aa).

A2 bears the N-acetylalanine mark. Residues 44-72 (QAEGPCLTREVAQLRAENRELRHCLYRLR) adopt a coiled-coil conformation. Residues 90 to 112 (RAEAGRAAAGAQPPPSQSLEEDV) are disordered. The 66-residue stretch at 155–220 (DSSNVITVRV…EGDATVELLT (66 aa)) folds into the TGS domain. A Phosphoserine modification is found at S451.

Belongs to the class-II aminoacyl-tRNA synthetase family. In terms of assembly, may be a component of the multisynthetase complex (MSC), a large multi-subunit complex which contains at least eight different aminoacyl-tRNA synthetases plus three auxillary subunits AIMP1, AIMP2 and EEF1E1. Interacts with the MSC components EPRS1, AIMP1, AIMP2 and KARS1.

It localises to the cytoplasm. It is found in the nucleus. The catalysed reaction is tRNA(Thr) + L-threonine + ATP = L-threonyl-tRNA(Thr) + AMP + diphosphate + H(+). In terms of biological role, catalyzes the attachment of threonine to tRNA(Thr) in a two-step reaction: threonine is first activated by ATP to form Thr-AMP and then transferred to the acceptor end of tRNA(Thr). Also edits incorrectly charged tRNA(Thr) via its editing domain, at the post-transfer stage. The chain is Threonine--tRNA ligase 2, cytoplasmic (TARS3) from Bos taurus (Bovine).